We begin with the raw amino-acid sequence, 443 residues long: ATP-dependent protease ATPase subunit HslU (443 aa).

Residues I18, 60–65, D256, E321, and R393 each bind ATP; that span reads GVGKTE.

This sequence belongs to the ClpX chaperone family. HslU subfamily. A double ring-shaped homohexamer of HslV is capped on each side by a ring-shaped HslU homohexamer. The assembly of the HslU/HslV complex is dependent on binding of ATP.

The protein localises to the cytoplasm. Functionally, ATPase subunit of a proteasome-like degradation complex; this subunit has chaperone activity. The binding of ATP and its subsequent hydrolysis by HslU are essential for unfolding of protein substrates subsequently hydrolyzed by HslV. HslU recognizes the N-terminal part of its protein substrates and unfolds these before they are guided to HslV for hydrolysis. In Shigella boydii serotype 18 (strain CDC 3083-94 / BS512), this protein is ATP-dependent protease ATPase subunit HslU.